The chain runs to 189 residues: GTP cyclohydrolase 1 (189 aa).

Positions 78, 81, and 150 each coordinate Zn(2+).

It belongs to the GTP cyclohydrolase I family. Homomer.

The enzyme catalyses GTP + H2O = 7,8-dihydroneopterin 3'-triphosphate + formate + H(+). Its pathway is cofactor biosynthesis; 7,8-dihydroneopterin triphosphate biosynthesis; 7,8-dihydroneopterin triphosphate from GTP: step 1/1. The chain is GTP cyclohydrolase 1 from Listeria monocytogenes serotype 4a (strain HCC23).